The following is a 138-amino-acid chain: Large ribosomal subunit protein uL16 (138 aa).

A compositionally biased stretch (basic residues) spans 1–13 (MLQPARRKFRKEQ). A disordered region spans residues 1-22 (MLQPARRKFRKEQKGRNTGVAT).

It belongs to the universal ribosomal protein uL16 family. Part of the 50S ribosomal subunit.

Functionally, binds 23S rRNA and is also seen to make contacts with the A and possibly P site tRNAs. The chain is Large ribosomal subunit protein uL16 from Acidovorax ebreus (strain TPSY) (Diaphorobacter sp. (strain TPSY)).